A 359-amino-acid polypeptide reads, in one-letter code: Phosphoserine aminotransferase (359 aa).

L-glutamate is bound at residue arginine 41. Residues 75 to 76, tryptophan 101, threonine 152, aspartate 171, and glutamine 194 contribute to the pyridoxal 5'-phosphate site; that span reads AS. Lysine 195 is modified (N6-(pyridoxal phosphate)lysine). 236 to 237 is a pyridoxal 5'-phosphate binding site; the sequence is NT.

The protein belongs to the class-V pyridoxal-phosphate-dependent aminotransferase family. SerC subfamily. In terms of assembly, homodimer. Pyridoxal 5'-phosphate is required as a cofactor.

Its subcellular location is the cytoplasm. It catalyses the reaction O-phospho-L-serine + 2-oxoglutarate = 3-phosphooxypyruvate + L-glutamate. The catalysed reaction is 4-(phosphooxy)-L-threonine + 2-oxoglutarate = (R)-3-hydroxy-2-oxo-4-phosphooxybutanoate + L-glutamate. Its pathway is amino-acid biosynthesis; L-serine biosynthesis; L-serine from 3-phospho-D-glycerate: step 2/3. It functions in the pathway cofactor biosynthesis; pyridoxine 5'-phosphate biosynthesis; pyridoxine 5'-phosphate from D-erythrose 4-phosphate: step 3/5. Functionally, catalyzes the reversible conversion of 3-phosphohydroxypyruvate to phosphoserine and of 3-hydroxy-2-oxo-4-phosphonooxybutanoate to phosphohydroxythreonine. The polypeptide is Phosphoserine aminotransferase (Acinetobacter baumannii (strain AB307-0294)).